The sequence spans 334 residues: Ornithine carbamoyltransferase (334 aa).

Residues 57 to 60, Gln-84, Arg-108, and 135 to 138 each bind carbamoyl phosphate; these read STRT and HPTQ. L-ornithine contacts are provided by residues Asn-168, Asp-232, and 236–237; that span reads SM. Carbamoyl phosphate-binding positions include 274–275 and Arg-321; that span reads CL.

Belongs to the aspartate/ornithine carbamoyltransferase superfamily. OTCase family.

It localises to the cytoplasm. The enzyme catalyses carbamoyl phosphate + L-ornithine = L-citrulline + phosphate + H(+). It participates in amino-acid degradation; L-arginine degradation via ADI pathway; carbamoyl phosphate from L-arginine: step 2/2. Its function is as follows. Reversibly catalyzes the transfer of the carbamoyl group from carbamoyl phosphate (CP) to the N(epsilon) atom of ornithine (ORN) to produce L-citrulline. The polypeptide is Ornithine carbamoyltransferase (Haemophilus influenzae (strain PittGG)).